The sequence spans 185 residues: Ribosome-recycling factor (185 aa).

Over residues 142–164 (IKKDGDAGEDDVTRAEKDLDKST) the composition is skewed to basic and acidic residues. The disordered stretch occupies residues 142-173 (IKKDGDAGEDDVTRAEKDLDKSTHQYTSQVDD).

It belongs to the RRF family.

The protein localises to the cytoplasm. In terms of biological role, responsible for the release of ribosomes from messenger RNA at the termination of protein biosynthesis. May increase the efficiency of translation by recycling ribosomes from one round of translation to another. The protein is Ribosome-recycling factor of Mycolicibacterium gilvum (strain PYR-GCK) (Mycobacterium gilvum (strain PYR-GCK)).